The chain runs to 751 residues: Probable alpha-galactosidase C (751 aa).

Positions 1–27 are cleaved as a signal peptide; the sequence is MFGSPKRAALAAASLLAVFGNGPSVMA. Residues Asn49, Asn57, Asn162, Asn186, Asn194, Asn366, Asn433, Asn452, and Asn500 are each glycosylated (N-linked (GlcNAc...) asparagine). The active-site Nucleophile is Asp510. Asp572 functions as the Proton donor in the catalytic mechanism. N-linked (GlcNAc...) asparagine glycosylation occurs at Asn720.

Belongs to the glycosyl hydrolase 36 family. As to quaternary structure, homotetramer. Requires Mg(2+) as cofactor. The cofactor is NAD(+).

It localises to the secreted. The catalysed reaction is Hydrolysis of terminal, non-reducing alpha-D-galactose residues in alpha-D-galactosides, including galactose oligosaccharides, galactomannans and galactolipids.. Functionally, hydrolyzes a variety of simple alpha-D-galactoside as well as more complex molecules such as oligosaccharides and polysaccharides. In Aspergillus oryzae (strain ATCC 42149 / RIB 40) (Yellow koji mold), this protein is Probable alpha-galactosidase C (aglC).